Here is a 119-residue protein sequence, read N- to C-terminus: Beta-2-microglobulin (119 aa).

An N-terminal signal peptide occupies residues 1 to 20 (MARFVVVALLALLSLSGLEA). The region spanning 25-114 (PKIQVYSRHP…VTFPTPKTVK (90 aa)) is the Ig-like C1-type domain. An intrachain disulfide couples Cys45 to Cys100.

It belongs to the beta-2-microglobulin family. In terms of assembly, heterodimer of an alpha chain and a beta chain. Beta-2-microglobulin is the beta-chain of major histocompatibility complex class I molecules.

The protein resides in the secreted. Functionally, component of the class I major histocompatibility complex (MHC). Involved in the presentation of peptide antigens to the immune system. The protein is Beta-2-microglobulin (B2M) of Alouatta seniculus (Red howler monkey).